Reading from the N-terminus, the 146-residue chain is Hemoglobin subunit beta-1 (146 aa).

N-acetylserine is present on S1. One can recognise a Globin domain in the interval 2-146; that stretch reads FLSAEEKGLV…VASALAHRYH (145 aa). At K17 the chain carries N6-succinyllysine. Residues S44 and S50 each carry the phosphoserine modification. An N6-succinyllysine modification is found at K59. Heme b contacts are provided by H63 and H92. R104 bears the Asymmetric dimethylarginine mark.

It belongs to the globin family. In terms of assembly, heterotetramer of two alpha chains and two beta chains. In terms of tissue distribution, red blood cells.

Involved in oxygen transport from the lung to the various peripheral tissues. This is Hemoglobin subunit beta-1 (HBB1) from Panthera leo (Lion).